We begin with the raw amino-acid sequence, 1054 residues long: DNA-directed RNA polymerase subunit beta' (1054 aa).

The Mg(2+) site is built by aspartate 383, aspartate 385, and aspartate 387. Residues cysteine 752, cysteine 826, cysteine 833, and cysteine 836 each coordinate Zn(2+).

Belongs to the RNA polymerase beta' chain family. The RNAP catalytic core consists of 2 alpha, 1 beta, 1 beta' and 1 omega subunit. When a sigma factor is associated with the core the holoenzyme is formed, which can initiate transcription. The cofactor is Mg(2+). It depends on Zn(2+) as a cofactor.

The enzyme catalyses RNA(n) + a ribonucleoside 5'-triphosphate = RNA(n+1) + diphosphate. Its function is as follows. DNA-dependent RNA polymerase catalyzes the transcription of DNA into RNA using the four ribonucleoside triphosphates as substrates. The chain is DNA-directed RNA polymerase subunit beta' from Weissella paramesenteroides (Leuconostoc paramesenteroides).